We begin with the raw amino-acid sequence, 427 residues long: Glutamate-1-semialdehyde 2,1-aminomutase 2 (427 aa).

Lys267 is subject to N6-(pyridoxal phosphate)lysine.

The protein belongs to the class-III pyridoxal-phosphate-dependent aminotransferase family. HemL subfamily. In terms of assembly, homodimer. Pyridoxal 5'-phosphate serves as cofactor.

It localises to the cytoplasm. The enzyme catalyses (S)-4-amino-5-oxopentanoate = 5-aminolevulinate. The protein operates within porphyrin-containing compound metabolism; protoporphyrin-IX biosynthesis; 5-aminolevulinate from L-glutamyl-tRNA(Glu): step 2/2. In Staphylococcus saprophyticus subsp. saprophyticus (strain ATCC 15305 / DSM 20229 / NCIMB 8711 / NCTC 7292 / S-41), this protein is Glutamate-1-semialdehyde 2,1-aminomutase 2.